The sequence spans 637 residues: Cell division cycle-related protein res1/sct1 (637 aa).

The HTH APSES-type domain maps to 6-112 (IHKITYSGVE…YSGSAFMPMS (107 aa)). The segment at residues 37 to 58 (ATQILKIAELDKPRRTRILEKF) is a DNA-binding region (H-T-H motif). Residues 114 to 137 (FTPQSNRKPTEAYRRNSPVKKSFS) form a disordered region. ANK repeat units lie at residues 236–265 (DGHT…NVVA) and 357–386 (HGDT…SSSI).

As to quaternary structure, DSC1 contains cdc10 and sct1/res1.

Its function is as follows. Acts as a positive regulator of the mitotic cell cycle and as a negative regulator of sexual differentiation. May be involved in the transcriptional regulation of the cdc22 and cdt1 genes. Is an integral component of the DSC1-like complex. In Schizosaccharomyces pombe (strain 972 / ATCC 24843) (Fission yeast), this protein is Cell division cycle-related protein res1/sct1 (res1).